The primary structure comprises 375 residues: Alcohol dehydrogenase 1 (375 aa).

An N-acetylserine modification is found at Ser-2. Zn(2+) is bound by residues Cys-47, His-68, Cys-98, Cys-101, Cys-104, Cys-112, and Cys-175. NAD(+)-binding positions include 200 to 205, Asp-224, and Lys-229; that span reads GLGGVG. Lys-234 is modified (N6-succinyllysine). 293 to 295 is a binding site for NAD(+); sequence VGV. Lys-340 carries the post-translational modification N6-succinyllysine. Arg-370 contacts NAD(+).

The protein belongs to the zinc-containing alcohol dehydrogenase family. In terms of assembly, homodimer. Zn(2+) serves as cofactor.

The protein resides in the cytoplasm. It carries out the reaction a primary alcohol + NAD(+) = an aldehyde + NADH + H(+). The catalysed reaction is a secondary alcohol + NAD(+) = a ketone + NADH + H(+). This is Alcohol dehydrogenase 1 (ADH1) from Oryctolagus cuniculus (Rabbit).